Here is a 165-residue protein sequence, read N- to C-terminus: Cystatin-like protein (165 aa).

Positions 1 to 19 (MDVALKLLLLAALTLLASA) are cleaved as a signal peptide. 2 cysteine pairs are disulfide-bonded: cysteine 80–cysteine 92 and cysteine 104–cysteine 118.

Involved in hypoxia tolerance. The chain is Cystatin-like protein from Clarias batrachus (Walking catfish).